The primary structure comprises 375 residues: Histidine biosynthesis bifunctional protein HisB (375 aa).

Positions 1–168 (MTPILFVDRD…GIAHELADAP (168 aa)) are histidinol-phosphatase. Asp8 serves as the catalytic Nucleophile. 3 residues coordinate Mg(2+): Asp8, Asp10, and Asp128. Asp10 acts as the Proton donor in catalysis. Positions 169 to 375 (RRAVVQRNTK…TALPSTKGAL (207 aa)) are imidazoleglycerol-phosphate dehydratase.

In the N-terminal section; belongs to the histidinol-phosphatase family. The protein in the C-terminal section; belongs to the imidazoleglycerol-phosphate dehydratase family. Mg(2+) is required as a cofactor.

It localises to the cytoplasm. It catalyses the reaction D-erythro-1-(imidazol-4-yl)glycerol 3-phosphate = 3-(imidazol-4-yl)-2-oxopropyl phosphate + H2O. The enzyme catalyses L-histidinol phosphate + H2O = L-histidinol + phosphate. Its pathway is amino-acid biosynthesis; L-histidine biosynthesis; L-histidine from 5-phospho-alpha-D-ribose 1-diphosphate: step 6/9. It functions in the pathway amino-acid biosynthesis; L-histidine biosynthesis; L-histidine from 5-phospho-alpha-D-ribose 1-diphosphate: step 8/9. The chain is Histidine biosynthesis bifunctional protein HisB from Xanthomonas campestris pv. campestris (strain B100).